The following is a 194-amino-acid chain: Leucyl/phenylalanyl-tRNA--protein transferase (194 aa).

Belongs to the L/F-transferase family.

Its subcellular location is the cytoplasm. It catalyses the reaction N-terminal L-lysyl-[protein] + L-leucyl-tRNA(Leu) = N-terminal L-leucyl-L-lysyl-[protein] + tRNA(Leu) + H(+). The enzyme catalyses N-terminal L-arginyl-[protein] + L-leucyl-tRNA(Leu) = N-terminal L-leucyl-L-arginyl-[protein] + tRNA(Leu) + H(+). It carries out the reaction L-phenylalanyl-tRNA(Phe) + an N-terminal L-alpha-aminoacyl-[protein] = an N-terminal L-phenylalanyl-L-alpha-aminoacyl-[protein] + tRNA(Phe). In terms of biological role, functions in the N-end rule pathway of protein degradation where it conjugates Leu, Phe and, less efficiently, Met from aminoacyl-tRNAs to the N-termini of proteins containing an N-terminal arginine or lysine. This is Leucyl/phenylalanyl-tRNA--protein transferase from Chlorobium limicola (strain DSM 245 / NBRC 103803 / 6330).